The primary structure comprises 108 residues: Parvalbumin beta (108 aa).

The residue at position 1 (A1) is an N-acetylalanine. 2 consecutive EF-hand domains span residues 38-73 (KSNEELEAIFKILDQDKSGFIEDEELELFLQNFSAG) and 77-108 (LTKTETETFLKAGDSDGDGKIGVDEFQKLVKA). Ca(2+) is bound by residues D51, D53, S55, F57, E59, E62, D90, D92, D94, K96, and E101.

This sequence belongs to the parvalbumin family.

Its function is as follows. In muscle, parvalbumin is thought to be involved in relaxation after contraction. It binds two calcium ions. The chain is Parvalbumin beta from Latimeria chalumnae (Coelacanth).